Reading from the N-terminus, the 645-residue chain is 1,4-alpha-glucan branching enzyme GlgB (645 aa).

Asp309 functions as the Nucleophile in the catalytic mechanism. Catalysis depends on Glu352, which acts as the Proton donor. Residues 619–645 are disordered; it reads VKTRKGSKKQDGSKTKVRSNVTSRGKR. A compositionally biased stretch (polar residues) spans 636 to 645; sequence RSNVTSRGKR.

It belongs to the glycosyl hydrolase 13 family. GlgB subfamily. In terms of assembly, monomer.

The catalysed reaction is Transfers a segment of a (1-&gt;4)-alpha-D-glucan chain to a primary hydroxy group in a similar glucan chain.. The protein operates within glycan biosynthesis; glycogen biosynthesis. Functionally, catalyzes the formation of the alpha-1,6-glucosidic linkages in glycogen by scission of a 1,4-alpha-linked oligosaccharide from growing alpha-1,4-glucan chains and the subsequent attachment of the oligosaccharide to the alpha-1,6 position. This is 1,4-alpha-glucan branching enzyme GlgB from Bacillus cereus (strain ATCC 10987 / NRS 248).